Reading from the N-terminus, the 374-residue chain is Queuine tRNA-ribosyltransferase (374 aa).

The active-site Proton acceptor is aspartate 94. Substrate-binding positions include 94–98, aspartate 148, glutamine 191, and glycine 218; that span reads DSGGF. An RNA binding region spans residues 249–255; it reads GVGSPDY. Aspartate 268 (nucleophile) is an active-site residue. Positions 273–277 are RNA binding; important for wobble base 34 recognition; sequence TRIGR. Zn(2+) contacts are provided by cysteine 306, cysteine 308, cysteine 311, and histidine 337.

Belongs to the queuine tRNA-ribosyltransferase family. In terms of assembly, homodimer. Within each dimer, one monomer is responsible for RNA recognition and catalysis, while the other monomer binds to the replacement base PreQ1. Zn(2+) serves as cofactor.

The catalysed reaction is 7-aminomethyl-7-carbaguanine + guanosine(34) in tRNA = 7-aminomethyl-7-carbaguanosine(34) in tRNA + guanine. The protein operates within tRNA modification; tRNA-queuosine biosynthesis. Its function is as follows. Catalyzes the base-exchange of a guanine (G) residue with the queuine precursor 7-aminomethyl-7-deazaguanine (PreQ1) at position 34 (anticodon wobble position) in tRNAs with GU(N) anticodons (tRNA-Asp, -Asn, -His and -Tyr). Catalysis occurs through a double-displacement mechanism. The nucleophile active site attacks the C1' of nucleotide 34 to detach the guanine base from the RNA, forming a covalent enzyme-RNA intermediate. The proton acceptor active site deprotonates the incoming PreQ1, allowing a nucleophilic attack on the C1' of the ribose to form the product. After dissociation, two additional enzymatic reactions on the tRNA convert PreQ1 to queuine (Q), resulting in the hypermodified nucleoside queuosine (7-(((4,5-cis-dihydroxy-2-cyclopenten-1-yl)amino)methyl)-7-deazaguanosine). The protein is Queuine tRNA-ribosyltransferase of Acetivibrio thermocellus (strain ATCC 27405 / DSM 1237 / JCM 9322 / NBRC 103400 / NCIMB 10682 / NRRL B-4536 / VPI 7372) (Clostridium thermocellum).